A 948-amino-acid chain; its full sequence is Sensor histidine kinase RcsC (948 aa).

At Met1 to Ala20 the chain is on the cytoplasmic side. Residues Leu21–Leu41 form a helical membrane-spanning segment. Over His42–Arg313 the chain is Periplasmic. A helical membrane pass occupies residues Ile314–Ala334. Over Arg335–Ala948 the chain is Cytoplasmic. One can recognise a PAS domain in the interval Gln357–Gln425. One can recognise a Histidine kinase domain in the interval Thr476 to Gly692. His479 carries the post-translational modification Phosphohistidine; by autocatalysis. Residues Ala705 to Ser805 form the ABL domain. Residues Met826–Ala940 enclose the Response regulatory domain. Asp875 carries the 4-aspartylphosphate modification.

This sequence belongs to the RcsC family. Interacts with RcsD. In terms of processing, autophosphorylated. Activation probably requires a transfer of a phosphate group from a His in the transmitter domain to an Asp in the receiver domain.

It localises to the cell inner membrane. It carries out the reaction ATP + protein L-histidine = ADP + protein N-phospho-L-histidine.. In terms of biological role, component of the Rcs signaling system, which controls transcription of numerous genes. RcsC functions as a membrane-associated protein kinase that phosphorylates RcsD in response to environmental signals. The phosphoryl group is then transferred to the response regulator RcsB. The protein is Sensor histidine kinase RcsC of Salmonella typhi.